A 398-amino-acid polypeptide reads, in one-letter code: Trans-2-enoyl-CoA reductase [NADH] (398 aa).

NAD(+)-binding positions include 47–52 (GASSGF), 74–75 (YE), 111–112 (DA), and 139–140 (LA). Residue Tyr225 coordinates substrate. Tyr235 functions as the Proton donor in the catalytic mechanism. NAD(+) contacts are provided by residues Lys244 and 274-276 (LVT).

This sequence belongs to the TER reductase family. As to quaternary structure, monomer.

The catalysed reaction is a 2,3-saturated acyl-CoA + NAD(+) = a (2E)-enoyl-CoA + NADH + H(+). Its pathway is lipid metabolism; fatty acid biosynthesis. Functionally, involved in the fatty acid synthesis (FAS II). Catalyzes the reduction of the carbon-carbon double bond of crotonyl-CoA to yield butyryl-CoA. The chain is Trans-2-enoyl-CoA reductase [NADH] from Clostridium acetobutylicum (strain ATCC 824 / DSM 792 / JCM 1419 / IAM 19013 / LMG 5710 / NBRC 13948 / NRRL B-527 / VKM B-1787 / 2291 / W).